A 438-amino-acid chain; its full sequence is Probable glucose-6-phosphate isomerase (438 aa).

Glutamate 280 acts as the Proton donor in catalysis. Active-site residues include histidine 301 and lysine 410.

Belongs to the GPI family.

The protein localises to the cytoplasm. It catalyses the reaction alpha-D-glucose 6-phosphate = beta-D-fructose 6-phosphate. Its pathway is carbohydrate biosynthesis; gluconeogenesis. The protein operates within carbohydrate degradation; glycolysis; D-glyceraldehyde 3-phosphate and glycerone phosphate from D-glucose: step 2/4. Catalyzes the reversible isomerization of glucose-6-phosphate to fructose-6-phosphate. This Methanococcus maripaludis (strain DSM 14266 / JCM 13030 / NBRC 101832 / S2 / LL) protein is Probable glucose-6-phosphate isomerase.